We begin with the raw amino-acid sequence, 707 residues long: Serine/threonine protein kinase UL97 (707 aa).

The span at 1–14 shows a compositional bias: low complexity; that stretch reads MSSALRSRARSASL. Disordered regions lie at residues 1-33, 113-146, 176-198, and 231-264; these read MSSA…SRAR, DGEK…GDGY, FTGG…RPLR, and ESQD…EADS. Over residues 113-127 the composition is skewed to basic and acidic residues; it reads DGEKEDAASDKENLR. The span at 178–188 shows a compositional bias: low complexity; that stretch reads GGSDPSDSVSG. Residues 337 to 345 and Lys-359 contribute to the ATP site; that span reads LGQGSFGEV. Catalysis depends on Asp-456, which acts as the Proton acceptor.

Belongs to the protein kinase superfamily. Tyr protein kinase family. HCMV ganciclovir subfamily. As to quaternary structure, interacts with UL83. Post-translationally, autophosphorylates on serine and threonine residues.

It is found in the virion. The enzyme catalyses L-seryl-[protein] + ATP = O-phospho-L-seryl-[protein] + ADP + H(+). The catalysed reaction is L-threonyl-[protein] + ATP = O-phospho-L-threonyl-[protein] + ADP + H(+). Serine/threonine protein kinase that plays important roles in several processes including nuclear viral egress, viral replication or regulation of host cell cycle progression. Participates in the acquisition of tegument during virion morphogenesis in the nucleus. Phosphorylates the viral nuclear egress complex (NEC) subunits UL50 and UL53. Redistributes the host nuclear lamina by phosphorylating cellular Lamins-A/C. Plays a role in viral DNA synthesis by phosphorylating the DNA polymerase processivity factor UL44. Stimulates host cell cycle to support viral DNA synthesis by phosphorylating host retinoblastoma/RB1 protein. Additional substrates have been identified including host EF1D or H2B. Also phosphorylates host SAMHD1 and thereby counteracts its antiviral effect by reducing its dNTP hydrolase activity. This chain is Serine/threonine protein kinase UL97 (UL97), found in Human cytomegalovirus (strain AD169) (HHV-5).